Consider the following 165-residue polypeptide: Putative ankyrin repeat domain-containing protein 20A5 (165 aa).

3 ANK repeats span residues 66–95, 99–128, and 132–161; these read QHRT…QIDI, ENRT…NPNL, and YGNT…NIEA.

This chain is Putative ankyrin repeat domain-containing protein 20A5 (ANKRD20A5P), found in Homo sapiens (Human).